A 116-amino-acid polypeptide reads, in one-letter code: Protein BIC2 (116 aa).

2 disordered regions span residues 1 to 33 and 95 to 116; these read MKNT…TCFP and DSGD…ESSC.

The protein resides in the nucleus. Regulates the blue-light dependent dimerization of CRY2 and formation of photobodies. Inhibits CRY phosphorylation. The protein is Protein BIC2 of Arabidopsis thaliana (Mouse-ear cress).